The sequence spans 120 residues: NAD(P)H-quinone oxidoreductase subunit 3 (120 aa).

A run of 3 helical transmembrane segments spans residues L10 to L30, M64 to V84, and L89 to V109.

It belongs to the complex I subunit 3 family. In terms of assembly, NDH-1 can be composed of about 15 different subunits; different subcomplexes with different compositions have been identified which probably have different functions.

It is found in the cellular thylakoid membrane. The enzyme catalyses a plastoquinone + NADH + (n+1) H(+)(in) = a plastoquinol + NAD(+) + n H(+)(out). It catalyses the reaction a plastoquinone + NADPH + (n+1) H(+)(in) = a plastoquinol + NADP(+) + n H(+)(out). In terms of biological role, NDH-1 shuttles electrons from an unknown electron donor, via FMN and iron-sulfur (Fe-S) centers, to quinones in the respiratory and/or the photosynthetic chain. The immediate electron acceptor for the enzyme in this species is believed to be plastoquinone. Couples the redox reaction to proton translocation, and thus conserves the redox energy in a proton gradient. Cyanobacterial NDH-1 also plays a role in inorganic carbon-concentration. This Synechococcus sp. (strain JA-3-3Ab) (Cyanobacteria bacterium Yellowstone A-Prime) protein is NAD(P)H-quinone oxidoreductase subunit 3.